The following is a 252-amino-acid chain: Sulfate transporter CysZ (252 aa).

The next 5 helical transmembrane spans lie at Phe29–Phe49, Phe66–Phe86, Leu141–Leu160, Val164–Phe186, and Ala212–Val232.

Belongs to the CysZ family.

The protein resides in the cell inner membrane. Its function is as follows. High affinity, high specificity proton-dependent sulfate transporter, which mediates sulfate uptake. Provides the sulfur source for the cysteine synthesis pathway. This chain is Sulfate transporter CysZ, found in Vibrio atlanticus (strain LGP32) (Vibrio splendidus (strain Mel32)).